Reading from the N-terminus, the 182-residue chain is UPF0423 protein BRA0381/BS1330_II0378 (182 aa).

Positions 1-24 (MKNLFRTAALMVPLSLALAYGAQA) are cleaved as a signal peptide.

This sequence belongs to the UPF0423 family.

This Brucella suis biovar 1 (strain 1330) protein is UPF0423 protein BRA0381/BS1330_II0378.